The sequence spans 1215 residues: Protein benign gonial cell neoplasm (1215 aa).

One copy of the ANK repeat lies at Thr407–Leu439. At Thr898 the chain carries Phosphothreonine.

As to quaternary structure, part of a complex composed of at least mei-P26, bam, bgcn and Sxl; this complex is involved in translational repression of nanos mRNA. Interacts with bam (via C-terminus); the interaction is direct. Interacts with mei-P26; the interaction is direct and does not require bam. Weakly interacts with wh/wuho; this interaction may be required for the function or formation of the mei-P26-bgcn-bam-Sxl complex. Part of a complex composed of at least tut, bam and bgcn; complex formation does not require RNA. Interacts with tut; the interaction is indirect and is mediated by bam. As part of the bam-bgcn-tut complex associates with twin; may recruit the CCR4-NOT1 deadenylation complex to mRNA 3'UTRs to mediate post-transcriptional regulation of expression. Expressed in testis and in 5-8 germline stem cells of ovaries, immediately adjacent to terminal filament. Expressed in ovarian germline cells throughout the germarium (at protein level).

In terms of biological role, forms a complex with tut and bam involved in 3'UTR-dependent post-transcriptional repression of several 3'-RNA processing factors, which promotes germline stem cell lineage differentiation and mitosis-to-meiosis transition. Part of a complex with bam involved in 3'-UTR-dependent translational repression of a subset of mRNAs, including those for mei-P26, nanos and shg/E-cadherin; may act as a promiscuous RNA-binding protein tethering bam to its target mRNAs. Required for regulating the progression of gonialblast cells through transit amplification and differentiation into gametes. In Drosophila melanogaster (Fruit fly), this protein is Protein benign gonial cell neoplasm.